Here is a 45-residue protein sequence, read N- to C-terminus: Large ribosomal subunit protein bL34 (45 aa).

It belongs to the bacterial ribosomal protein bL34 family.

The chain is Large ribosomal subunit protein bL34 from Opitutus terrae (strain DSM 11246 / JCM 15787 / PB90-1).